We begin with the raw amino-acid sequence, 377 residues long: 1,3,6,8-tetrahydroxynaphthalene synthase (377 aa).

Cys164 is an active-site residue.

It belongs to the thiolase-like superfamily. Chalcone/stilbene synthases family. As to quaternary structure, homodimer.

The catalysed reaction is 5 malonyl-CoA + 5 H(+) = naphthalene-1,3,6,8-tetrol + 5 CO2 + 5 CoA + H2O. The protein operates within pigment biosynthesis; melanin biosynthesis. Functionally, involved in the biosynthesis of melanin but also various secondary metabolites containing a naphthoquinone ring. Catalyzes the iterative condensation of five CoA-linked malonyl units to form a pentaketide intermediate. THNS subsequently catalyzes the dual intramolecular Claisen and aldol condensations of this linear intermediate to produce the fused ring of 1,3,6,8-tetrahydroxynaphthalene (THN). The protein is 1,3,6,8-tetrahydroxynaphthalene synthase of Streptomyces peucetius subsp. caesius.